Here is a 272-residue protein sequence, read N- to C-terminus: Tryptophan synthase alpha chain (272 aa).

Catalysis depends on proton acceptor residues Glu-49 and Glu-60.

Belongs to the TrpA family. Tetramer of two alpha and two beta chains.

It carries out the reaction (1S,2R)-1-C-(indol-3-yl)glycerol 3-phosphate + L-serine = D-glyceraldehyde 3-phosphate + L-tryptophan + H2O. The protein operates within amino-acid biosynthesis; L-tryptophan biosynthesis; L-tryptophan from chorismate: step 5/5. In terms of biological role, the alpha subunit is responsible for the aldol cleavage of indoleglycerol phosphate to indole and glyceraldehyde 3-phosphate. This is Tryptophan synthase alpha chain from Legionella pneumophila (strain Lens).